The following is a 277-amino-acid chain: 5-formyltetrahydrofolate cyclo-ligase, mitochondrial (277 aa).

The transit peptide at 1–48 (MIGARVFCITTTALRRSPIFFFPKIPTRPVFRLSPATRPIVAMSTTSK) directs the protein to the mitochondrion. Residue 60 to 64 (KRVVR) participates in ATP binding. Residues Glu-113 and 207 to 211 (RGGGY) each bind substrate. Residues 206-213 (GRGGGYYD) and Asp-254 each bind ATP.

This sequence belongs to the 5-formyltetrahydrofolate cyclo-ligase family. As to quaternary structure, monomer.

It localises to the mitochondrion. It carries out the reaction (6S)-5-formyl-5,6,7,8-tetrahydrofolate + ATP = (6R)-5,10-methenyltetrahydrofolate + ADP + phosphate. Functionally, contributes to tetrahydrofolate metabolism and photorespiration through the regulation of serine hydroxymethyltransferase. Prefers the pentalutamyl to the monoglutamyl form of 5-formyltetrahydrofolate. The protein is 5-formyltetrahydrofolate cyclo-ligase, mitochondrial (5FCL) of Arabidopsis thaliana (Mouse-ear cress).